Reading from the N-terminus, the 149-residue chain is MNRITNNKTIWIKPKYVEKKWYVIDASDKVLGRIATEAVKILRGKHKPYYTPHQDLGDNVIIVNASKIRLTGKKYSQKIYYRHSRYPGGLYSDTFRTLSERKPTAPLEIAIKGMLPKGPLGRELFRNLKVFADSNHTLKAQNLYKLEAN.

The protein belongs to the universal ribosomal protein uL13 family. Part of the 50S ribosomal subunit.

In terms of biological role, this protein is one of the early assembly proteins of the 50S ribosomal subunit, although it is not seen to bind rRNA by itself. It is important during the early stages of 50S assembly. The polypeptide is Large ribosomal subunit protein uL13 (Borrelia hermsii (strain HS1 / DAH)).